A 35-amino-acid chain; its full sequence is Conotoxin Cl6.16 (35 aa).

Intrachain disulfides connect cysteine 10/cysteine 22, cysteine 16/cysteine 27, and cysteine 21/cysteine 34.

Expressed by the venom duct.

The protein localises to the secreted. The chain is Conotoxin Cl6.16 from Californiconus californicus (California cone).